The sequence spans 179 residues: Peptide deformylase (179 aa).

Fe cation contacts are provided by Cys102 and His144. The active site involves Glu145. Fe cation is bound at residue His148.

The protein belongs to the polypeptide deformylase family. Fe(2+) is required as a cofactor.

The enzyme catalyses N-terminal N-formyl-L-methionyl-[peptide] + H2O = N-terminal L-methionyl-[peptide] + formate. In terms of biological role, removes the formyl group from the N-terminal Met of newly synthesized proteins. Requires at least a dipeptide for an efficient rate of reaction. N-terminal L-methionine is a prerequisite for activity but the enzyme has broad specificity at other positions. This is Peptide deformylase from Wolbachia pipientis subsp. Culex pipiens (strain wPip).